A 96-amino-acid polypeptide reads, in one-letter code: C-C motif chemokine 20 (96 aa).

An N-terminal signal peptide occupies residues Met1–Ala26. Cystine bridges form between Cys32-Cys58 and Cys33-Cys74.

Belongs to the intercrine beta (chemokine CC) family. Post-translationally, C-terminal processed forms which lack 1, 3 or 6 amino acids are produced by proteolytic cleavage after secretion from peripheral blood monocytes. As to expression, expressed in the seminal plasma, endometrial fluid and follicular fluid (at protein level). Expressed predominantly in the liver, lymph nodes, appendix, peripheral blood lymphocytes, and fetal lung. Low levels seen in thymus, prostate, testis, small intestine and colon.

The protein localises to the secreted. In terms of biological role, acts as a ligand for C-C chemokine receptor CCR6. Signals through binding and activation of CCR6 and induces a strong chemotactic response and mobilization of intracellular calcium ions. The ligand-receptor pair CCL20-CCR6 is responsible for the chemotaxis of dendritic cells (DC), effector/memory T-cells and B-cells and plays an important role at skin and mucosal surfaces under homeostatic and inflammatory conditions, as well as in pathology, including cancer and various autoimmune diseases. CCL20 acts as a chemotactic factor that attracts lymphocytes and, slightly, neutrophils, but not monocytes. Involved in the recruitment of both the pro-inflammatory IL17 producing helper T-cells (Th17) and the regulatory T-cells (Treg) to sites of inflammation. Required for optimal migration of thymic natural regulatory T cells (nTregs) and DN1 early thymocyte progenitor cells. C-terminal processed forms have been shown to be equally chemotactically active for leukocytes. Positively regulates sperm motility and chemotaxis via its binding to CCR6 which triggers Ca2+ mobilization in the sperm which is important for its motility. Inhibits proliferation of myeloid progenitors in colony formation assays. May be involved in formation and function of the mucosal lymphoid tissues by attracting lymphocytes and dendritic cells towards epithelial cells. Possesses antibacterial activity towards E.coli ATCC 25922 and S.aureus ATCC 29213. The sequence is that of C-C motif chemokine 20 (CCL20) from Homo sapiens (Human).